The following is a 108-amino-acid chain: uncharacterized protein (108 aa).

This is an uncharacterized protein from Saccharolobus islandicus (Sulfolobus islandicus).